The primary structure comprises 644 residues: MRTRLNFLLLCIASVLSVIWIGVLLTWNDNNLGGISLNGGKDSAYDDLLSLGSFNDMEVDSYVTNIYDNAPVLGCTDLSYHGLLKVTPKHDLACDLEFIRAQILDIDVYSAIKDLEDKALTVKQKVEKHWFTFYGSSVFLPEHDVHYLVRRVIFSAEGKANSPVTSIIVAQIYDKNWNELNGHFLDILNPNTGKVQHNTFPQVLPIATNFVKGKKFRGAEDPRVVLRKGRFGPDPLVMFNSLTQDNKRRRIFTISPFDQFKTVMYDIKDYEMPRYEKNWVPFFLKDNQEAVHFVYSFNPLRVLKCSLDDGSCDIVFEIPKVDSMSSELRGATPMINLPQAIPMAKDKEIWVSFPRTRIANCGCSRTTYRPMLMLFVREGSNFFVELLSTSLDFGLEVLPYSGNGLPCSADHSVLIPNSIDNWEVVDSNGDDILTLSFSEADKSTSVIHIRGLYNYLSELDGYQGPEAEDEHNFQRILSDLHFDNKTTVNNFIKVQSCALDAAKGYCKEYGLTRGEAERRRRVAEERKKKEKEEEEKKKKKEKEEEEKKRIEEEKKKIEEKERKEKEKEEAERKKLQEMKKKLEEITEKLEKGQRNKEIDPKEKQREEEERKERVRKIAEKQRKEAEKKEAEKKANDKKDLKIRQ.

The Cytoplasmic portion of the chain corresponds to 1–6 (MRTRLN). A helical transmembrane segment spans residues 7–27 (FLLLCIASVLSVIWIGVLLTW). Over 28 to 644 (NDNNLGGISL…NDKKDLKIRQ (617 aa)) the chain is Extracellular. The N-linked (GlcNAc...) asparagine glycan is linked to Asn-484. Positions 512 to 644 (TRGEAERRRR…NDKKDLKIRQ (133 aa)) form a coiled coil. A disordered region spans residues 517 to 644 (ERRRRVAEER…NDKKDLKIRQ (128 aa)).

Belongs to the BMT family.

Its subcellular location is the membrane. Functionally, beta-mannosyltransferase involved in cell wall biosynthesis. Initiates the beta-mannosylation of core N-linked glycans. This chain is Beta-mannosyltransferase 2 (BMT2), found in Komagataella phaffii (strain GS115 / ATCC 20864) (Yeast).